Here is a 4262-residue protein sequence, read N- to C-terminus: Polyketide synthase PksM (4262 aa).

The tract at residues Met-1–Ala-114 is N-terminal hotdog fold 1. The PKS/mFAS DH 1 domain maps to Met-1 to Phe-271. The Proton acceptor; for dehydratase activity 1 role is filled by His-18. Positions Asp-129–Phe-271 are C-terminal hotdog fold 1. Asp-190 serves as the catalytic Proton donor; for dehydratase activity 1. A Carrier 1 domain is found at Pro-293 to Tyr-367. Residue Ser-327 is modified to O-(pantetheine 4'-phosphoryl)serine. The Ketosynthase family 3 (KS3) 1 domain occupies Gly-393–Glu-831. Residues Cys-569, His-704, and His-744 each act as for beta-ketoacyl synthase 1 activity in the active site. An N-terminal hotdog fold 2 region spans residues His-1009–Glu-1135. The 293-residue stretch at His-1009 to Ser-1301 folds into the PKS/mFAS DH 2 domain. Residue His-1038 is the Proton acceptor; for dehydratase activity 2 of the active site. Residues Ser-1149–Ser-1301 are C-terminal hotdog fold 2. The Proton donor; for dehydratase activity 2 role is filled by Asp-1211. Residues Glu-2188–Lys-2261 form the Carrier 2 domain. Ser-2222 bears the O-(pantetheine 4'-phosphoryl)serine mark. Polar residues predominate over residues Val-2275–Pro-2291. The tract at residues Val-2275–Pro-2313 is disordered. The 416-residue stretch at Ser-2319–Glu-2734 folds into the Ketosynthase family 3 (KS3) 2 domain. Residues Cys-2476, His-2611, and His-2651 each act as for beta-ketoacyl synthase 2 activity in the active site. A coiled-coil region spans residues Ala-2750–Leu-2826. The 78-residue stretch at Ser-3409 to His-3486 folds into the Carrier 3 domain. At Ser-3446 the chain carries O-(pantetheine 4'-phosphoryl)serine. Residues Asp-3529–Glu-3944 form the Ketosynthase family 3 (KS3) 3 domain. Catalysis depends on for beta-ketoacyl synthase 3 activity residues Cys-3690, His-3825, and His-3865. Positions Lys-4004–Asn-4033 form a coiled coil. Positions Asn-4135 to Ala-4212 constitute a Carrier 4 domain. Ser-4172 bears the O-(pantetheine 4'-phosphoryl)serine mark.

The cofactor is pantetheine 4'-phosphate.

The protein localises to the cytoplasm. The protein operates within antibiotic biosynthesis; bacillaene biosynthesis. Involved in some intermediate steps for the synthesis of the antibiotic polyketide bacillaene which is involved in secondary metabolism. The polypeptide is Polyketide synthase PksM (pksM) (Bacillus subtilis (strain 168)).